A 771-amino-acid chain; its full sequence is Leucine-rich repeat and fibronectin type III domain-containing protein 1 (771 aa).

A signal peptide spans 1–31 (MAPGPFSSALLSPPPAALPFLLLLWAGASRG). The LRRNT domain maps to 32-65 (QPCPGRCICQNVAPTLTMLCAKTGLLFVPPAIDR). At 32–536 (QPCPGRCICQ…LRAHFLGGTM (505 aa)) the chain is on the extracellular side. 7 LRR repeats span residues 66 to 87 (RVVELRLTDNFIAAVRRRDFAN), 90 to 111 (SLVHLTLSRNTIGQVAAGAFAD), 114 to 135 (ALRALHLDSNRLAEVRGDQLRG), 138 to 159 (NLRHLILGNNQIRRVESAAFDA), 163 to 184 (TVEDLDLSYNNLEALPWEAVGQ), 187 to 208 (NLNTLTLDHNLIDHIAEGTFVQ), and 211 to 232 (KLVRLDMTSNRLHKLPPDGLFL). An N-linked (GlcNAc...) asparagine glycan is attached at Asn87. Positions 252 to 298 (NPLHCNCELLWLRRLTREDDLETCATPEHLTDRYFWSIPEEEFLCEP) constitute an LRRCT domain. One can recognise an Ig-like domain in the interval 299–386 (PLITRQAGGR…GEATAPVEVC (88 aa)). The cysteines at positions 321 and 370 are disulfide-linked. The N-linked (GlcNAc...) asparagine glycan is linked to Asn343. The tract at residues 397–422 (PAAPPPLTEPGSSDIATPGRPGANDS) is disordered. A Fibronectin type-III domain is found at 424–520 (AERRLVAAEL…GCVQFTTAGD (97 aa)). A helical membrane pass occupies residues 537–557 (IIAIGGVIVASVLVFIVLLMI). Over 558–771 (RYKVYGDGDS…STEWMLESTV (214 aa)) the chain is Cytoplasmic. A phosphoserine mark is found at Ser613 and Ser718. Residues 654 to 743 (PSEETSGEES…HLDGAGGGAA (90 aa)) are disordered. The segment covering 719 to 732 (YPRRARRTKRHRST) has biased composition (basic residues). The short motif at 768 to 771 (ESTV) is the PDZ-binding element.

This sequence belongs to the LRFN family. As to quaternary structure, can form heteromeric complexes with LRFN2, LRFN3, LRFN4 and LRFN5. Forms homomeric complexes, but not across cell junctions. Interacts with DLG1, DLG2, DLG3 and DLG4. Interacts with 2 AMPA receptor subunits GRIA1 and GRIA2 and NMDA receptor subunit GRIN1. Glycosylated.

It is found in the membrane. Its subcellular location is the synapse. The protein localises to the postsynaptic density membrane. Functionally, promotes neurite outgrowth in hippocampal neurons. Involved in the regulation and maintenance of excitatory synapses. Induces the clustering of excitatory postsynaptic proteins, including DLG4, DLGAP1, GRIA1 and GRIN1. The polypeptide is Leucine-rich repeat and fibronectin type III domain-containing protein 1 (LRFN1) (Homo sapiens (Human)).